The sequence spans 378 residues: REST corepressor 3 (378 aa).

Residues methionine 1 to threonine 83 enclose the ELM2 domain. The 52-residue stretch at proline 84 to serine 135 folds into the SANT domain. The disordered stretch occupies residues leucine 147 to lysine 219. The span at glutamate 162–asparagine 184 shows a compositional bias: basic and acidic residues. A compositionally biased stretch (basic residues) spans glutamine 205 to proline 217. Residues alanine 238 to glycine 273 are a coiled coil. The tract at residues threonine 337 to threonine 356 is disordered.

Belongs to the CoREST family.

The protein resides in the nucleus. Functionally, may act as a component of a corepressor complex that represses transcription. In Gallus gallus (Chicken), this protein is REST corepressor 3 (RCOR3).